The sequence spans 1011 residues: RAS protein activator like-3 (1011 aa).

The disordered stretch occupies residues Met1–Phe38. Over residues Ser7–Ser22 the composition is skewed to low complexity. A phosphoserine mark is found at Ser18 and Ser51. Disordered regions lie at residues His52 to Asp136, Gly151 to Gln197, and Lys209 to Glu230. The segment covering Ser81–Asn95 has biased composition (basic residues). Positions Pro100–Leu117 are enriched in acidic residues. Residues Glu118 to Asn131 are compositionally biased toward pro residues. Phosphoserine is present on residues Ser164, Ser166, Ser167, and Ser170. Basic and acidic residues predominate over residues Arg179–Pro190. Residues Gln197–Gln293 form the PH domain. 3 positions are modified to phosphoserine: Ser224, Ser228, and Ser231. Thr234 bears the Phosphothreonine mark. The 121-residue stretch at Trp284–Phe404 folds into the C2 domain. The region spanning Gly474–Val682 is the Ras-GAP domain. Disordered stretches follow at residues Gln756–His885 and Leu987–Thr1011. A phosphoserine mark is found at Ser787 and Ser790. A compositionally biased stretch (basic and acidic residues) spans Arg792–Leu808. 2 stretches are compositionally biased toward polar residues: residues Gln871 to Leu882 and Leu987 to Gln999. The stretch at Val888 to Ser988 forms a coiled coil. The residue at position 988 (Ser988) is a Phosphoserine.

As to expression, predominantly expressed in cells of hematopoietic lineages.

Its subcellular location is the cytoplasm. The protein resides in the cell cortex. In terms of biological role, functions as a Ras GTPase-activating protein. Plays an important role in the expansion and functions of natural killer T (NKT) cells in the liver by negatively regulating RAS activity and the down-stream ERK signaling pathway. The protein is RAS protein activator like-3 (RASAL3) of Homo sapiens (Human).